The primary structure comprises 147 residues: Hemoglobin subunit beta (147 aa).

A Globin domain is found at 2–147 (DWTDAERAAI…VVSALGRQYH (146 aa)). Positions 63 and 92 each coordinate heme b.

This sequence belongs to the globin family. Heterotetramer of two alpha chains and two beta chains. In terms of tissue distribution, red blood cells.

Functionally, involved in oxygen transport from gills to the various peripheral tissues. The protein is Hemoglobin subunit beta (hbb) of Leiostomus xanthurus (Spot).